A 431-amino-acid chain; its full sequence is Enolase (431 aa).

Gln166 provides a ligand contact to (2R)-2-phosphoglycerate. The Proton donor role is filled by Glu208. The Mg(2+) site is built by Asp245, Glu288, and Asp315. (2R)-2-phosphoglycerate contacts are provided by Lys340, Arg369, Ser370, and Lys391. Lys340 acts as the Proton acceptor in catalysis.

The protein belongs to the enolase family. Mg(2+) is required as a cofactor.

It localises to the cytoplasm. Its subcellular location is the secreted. The protein localises to the cell surface. It catalyses the reaction (2R)-2-phosphoglycerate = phosphoenolpyruvate + H2O. Its pathway is carbohydrate degradation; glycolysis; pyruvate from D-glyceraldehyde 3-phosphate: step 4/5. In terms of biological role, catalyzes the reversible conversion of 2-phosphoglycerate (2-PG) into phosphoenolpyruvate (PEP). It is essential for the degradation of carbohydrates via glycolysis. The protein is Enolase of Clostridium botulinum (strain Eklund 17B / Type B).